The primary structure comprises 191 residues: MGKKLVMAQRRGETRALCLGVAMVVGAVITYYILGTTVLPLYQKSVWTQESTCHLIETNIRDQEELEGKRVPQYPCLWVNVSSVGRWAVLYHTEDTRDQNHQCSYIPSSLDNYQVARADVEKVRARFHENQDFFCFSTTRENETSVLYRRLYGPQSLLFSLFWPTFLLTGGLLIIVMVKINQSLSILAAQR.

The Cytoplasmic portion of the chain corresponds to 2–18; it reads GKKLVMAQRRGETRALC. A helical membrane pass occupies residues 19–39; the sequence is LGVAMVVGAVITYYILGTTVL. Topologically, residues 40–157 are extracellular; it reads PLYQKSVWTQ…YRRLYGPQSL (118 aa). 2 N-linked (GlcNAc...) asparagine glycosylation sites follow: Asn80 and Asn142. Residues 158–178 traverse the membrane as a helical segment; sequence LFSLFWPTFLLTGGLLIIVMV. Residues 179 to 191 are Cytoplasmic-facing; it reads KINQSLSILAAQR.

The protein belongs to the KCNMB (TC 8.A.14.1) family. KCNMB1 subfamily. In terms of assembly, interacts with KCNMA1 tetramer. There are probably 4 molecules of KCMNB1 per KCNMA1 tetramer. N-glycosylated.

It is found in the membrane. Its function is as follows. Regulatory subunit of the calcium activated potassium KCNMA1 (maxiK) channel. Modulates the calcium sensitivity and gating kinetics of KCNMA1, thereby contributing to KCNMA1 channel diversity. Increases the apparent Ca(2+)/voltage sensitivity of the KCNMA1 channel. It also modifies KCNMA1 channel kinetics and alters its pharmacological properties. It slows down the activation and the deactivation kinetics of the channel. Acts as a negative regulator of smooth muscle contraction by enhancing the calcium sensitivity to KCNMA1. Its presence is also a requirement for internal binding of the KCNMA1 channel opener dehydrosoyasaponin I (DHS-1) triterpene glycoside and for external binding of the agonist hormone 17-beta-estradiol (E2). Increases the binding activity of charybdotoxin (CTX) toxin to KCNMA1 peptide blocker by increasing the CTX association rate and decreasing the dissociation rate. The polypeptide is Calcium-activated potassium channel subunit beta-1 (KCNMB1) (Bos taurus (Bovine)).